The chain runs to 166 residues: Urease accessory protein UreE 2 (166 aa).

The tract at residues 133 to 156 is disordered; sequence QPEHGAYGGGHHHSRAGEEDFNYP.

Belongs to the UreE family.

It is found in the cytoplasm. Functionally, involved in urease metallocenter assembly. Binds nickel. Probably functions as a nickel donor during metallocenter assembly. This is Urease accessory protein UreE 2 from Pseudomonas syringae pv. tomato (strain ATCC BAA-871 / DC3000).